Consider the following 187-residue polypeptide: MTAKSDEPGRWTVAVYCAAAPTHPELLELAGAVGAAIAARGWTLVWGGGHVSAMGAVSSAARAHGGWTVGVIPKMLVHRELADHDADELVVTETMWERKQVMEDRANAFITLPGGVGTLDELLDVWTEGYLGMHDKSIVVLDPWGHFDGLRAWLSELADTGYVSRTAMERLIVVDNLDDALQACAPG.

Residues Glu80, 98-99 (RK), 115-121 (GVGTLDE), and Thr127 each bind substrate.

This sequence belongs to the LOG family.

It carries out the reaction N(6)-(dimethylallyl)adenosine 5'-phosphate + H2O = N(6)-dimethylallyladenine + D-ribose 5-phosphate. The enzyme catalyses 9-ribosyl-trans-zeatin 5'-phosphate + H2O = trans-zeatin + D-ribose 5-phosphate. Catalyzes the hydrolytic removal of ribose 5'-monophosphate from nitrogen N6-modified adenosines, the final step of bioactive cytokinin synthesis. This Mycobacterium marinum (strain ATCC BAA-535 / M) protein is Cytokinin riboside 5'-monophosphate phosphoribohydrolase.